Consider the following 422-residue polypeptide: uncharacterized protein (422 aa).

Serine 124, serine 126, and serine 151 each carry phosphoserine. The tract at residues 144 to 166 (TNSLNHDSPPSTPPRRPDTSTSK) is disordered. A Glycyl lysine isopeptide (Lys-Gly) (interchain with G-Cter in SUMO2) cross-link involves residue lysine 250. Disordered stretches follow at residues 251–285 (ADTT…NDSS) and 299–324 (GRGP…ATTA). Residues 271 to 282 (ETDEDLAWDSDN) show a composition bias toward acidic residues. A phosphoserine mark is found at serine 280 and serine 306. Positions 310–324 (ALTVKAKATSSATTA) are enriched in low complexity. A Phosphoserine modification is found at serine 351.

This is an uncharacterized protein from Homo sapiens (Human).